The sequence spans 59 residues: UPF0509 protein KPN78578_12530 (59 aa).

This sequence belongs to the UPF0509 family.

The polypeptide is UPF0509 protein KPN78578_12530 (Klebsiella pneumoniae subsp. pneumoniae (strain ATCC 700721 / MGH 78578)).